The sequence spans 289 residues: 4-diphosphocytidyl-2-C-methyl-D-erythritol kinase (289 aa).

Residue Lys16 is part of the active site. 99 to 109 lines the ATP pocket; that stretch reads PMGGGLGGGSS. Asp141 is a catalytic residue.

Belongs to the GHMP kinase family. IspE subfamily.

It carries out the reaction 4-CDP-2-C-methyl-D-erythritol + ATP = 4-CDP-2-C-methyl-D-erythritol 2-phosphate + ADP + H(+). It functions in the pathway isoprenoid biosynthesis; isopentenyl diphosphate biosynthesis via DXP pathway; isopentenyl diphosphate from 1-deoxy-D-xylulose 5-phosphate: step 3/6. Catalyzes the phosphorylation of the position 2 hydroxy group of 4-diphosphocytidyl-2C-methyl-D-erythritol. The protein is 4-diphosphocytidyl-2-C-methyl-D-erythritol kinase of Ralstonia pickettii (strain 12J).